A 353-amino-acid polypeptide reads, in one-letter code: Protein RecA (353 aa).

Residue 68 to 75 (GPESSGKT) coordinates ATP.

The protein belongs to the RecA family.

The protein resides in the cytoplasm. Its function is as follows. Can catalyze the hydrolysis of ATP in the presence of single-stranded DNA, the ATP-dependent uptake of single-stranded DNA by duplex DNA, and the ATP-dependent hybridization of homologous single-stranded DNAs. It interacts with LexA causing its activation and leading to its autocatalytic cleavage. The protein is Protein RecA of Roseiflexus sp. (strain RS-1).